The sequence spans 123 residues: UPF0102 protein VSAL_I2655 (123 aa).

The protein belongs to the UPF0102 family.

The polypeptide is UPF0102 protein VSAL_I2655 (Aliivibrio salmonicida (strain LFI1238) (Vibrio salmonicida (strain LFI1238))).